A 143-amino-acid chain; its full sequence is uncharacterized protein (143 aa).

Positions 13-143 (SLQFPHHRPG…QDAAHQCRIQ (131 aa)) are disordered. Residues 17–31 (PHHRPGLRRHRKNTT) show a composition bias toward basic residues. 3 stretches are compositionally biased toward basic and acidic residues: residues 35-48 (AAVD…RGDA), 84-96 (DGRE…AEEK), and 112-133 (EKQH…DHAG). Residues 134 to 143 (QDAAHQCRIQ) show a composition bias toward low complexity.

This is an uncharacterized protein from Homo sapiens (Human).